Consider the following 185-residue polypeptide: Ribosome-recycling factor (185 aa).

It belongs to the RRF family.

The protein localises to the cytoplasm. Responsible for the release of ribosomes from messenger RNA at the termination of protein biosynthesis. May increase the efficiency of translation by recycling ribosomes from one round of translation to another. The chain is Ribosome-recycling factor from Neisseria meningitidis serogroup A / serotype 4A (strain DSM 15465 / Z2491).